The sequence spans 463 residues: L-seryl-tRNA(Sec) selenium transferase (463 aa).

Lysine 295 is subject to N6-(pyridoxal phosphate)lysine.

Belongs to the SelA family. Homodecamer; pentamer of dimers. Binds only one seryl-tRNA(Sec) per dimer. Pyridoxal 5'-phosphate serves as cofactor.

It is found in the cytoplasm. It carries out the reaction L-seryl-tRNA(Sec) + selenophosphate + H(+) = L-selenocysteinyl-tRNA(Sec) + phosphate. It functions in the pathway aminoacyl-tRNA biosynthesis; selenocysteinyl-tRNA(Sec) biosynthesis; selenocysteinyl-tRNA(Sec) from L-seryl-tRNA(Sec) (bacterial route): step 1/1. Functionally, converts seryl-tRNA(Sec) to selenocysteinyl-tRNA(Sec) required for selenoprotein biosynthesis. In Salmonella paratyphi A (strain AKU_12601), this protein is L-seryl-tRNA(Sec) selenium transferase.